The following is a 280-amino-acid chain: 2-C-methyl-D-erythritol 4-phosphate cytidylyltransferase (280 aa).

It belongs to the IspD/TarI cytidylyltransferase family. IspD subfamily.

It catalyses the reaction 2-C-methyl-D-erythritol 4-phosphate + CTP + H(+) = 4-CDP-2-C-methyl-D-erythritol + diphosphate. It participates in isoprenoid biosynthesis; isopentenyl diphosphate biosynthesis via DXP pathway; isopentenyl diphosphate from 1-deoxy-D-xylulose 5-phosphate: step 2/6. In terms of biological role, catalyzes the formation of 4-diphosphocytidyl-2-C-methyl-D-erythritol from CTP and 2-C-methyl-D-erythritol 4-phosphate (MEP). This chain is 2-C-methyl-D-erythritol 4-phosphate cytidylyltransferase, found in Psychrobacter cryohalolentis (strain ATCC BAA-1226 / DSM 17306 / VKM B-2378 / K5).